A 1288-amino-acid chain; its full sequence is MASSSGDSVTRRSVASQFFTQEEGPSIDGMTTSERVVDLLNQAALITNDSKITVLKQVQELIINKDPTLLDNFLDEIIAFQADKSIEVRKFVIGFIEEACKRDIELLLKLIANLNMLLRDENVNVVKKAILTMTQLYKVALQWMVKSRVISDLQEACWDMVSSMAGEIILLLDSDNDGIRTHAIKFVEGLIVTLSPRMADSEVPRRQEHDISLDRIPRDHPYIQYNVLWEEGKAAVEQLLKFMVHPAISSINLTTALGSLANIARQRPMFMSEVIQAYETLHANLPPTLAKSQVSSVRKNLKLHLLSVLKHPASLEFQAQITTLLVDLGTPQAEIARNMPSSKDSRKRPRDDTDSTLKKMKLEPNLGEDDEDKDLEPGPSGTSKASAQISGQSDTDITAEFLQPLLTPDNVANLVLISMVYLPETMPASFQAIYTPVESAGTEAQIKHLARLMATQMTAAGLGPGVEQTKQCKEEPKEEKVVKPESVLIKRRLSVQGQAISVVGSQSTMSPLEEEVPQAKRRPEPIIPVTQPRLAGAGGRKKIFRLSDVLKPLTDAQVEAMKLGAVKRILRAEKAVACSGAAQVRIKILASLVTQFDSGFKAEVLSFILEDVRARLDLAFAWLYQEYNAYLAAGTSGTLDKYEDCLICLLSGLQEKPDQKDGIFTKVVLEAPLITESALEVIRKYCEDESRAYLGMSTLGDLIFKRPSRQFQYLHVLLDLSSHEKDRVRSQALLFIKRMYEKEQLREYVEKFALNYLQLLVHPNPPSVLFGADKDTEVAAPWTEETVKQCLYLYLALLPQNHKLIHELAAVYTEAIADIKRTVLRVIEQPIRGMGMNSPELLLLVENCPKGAETLVTRCLHSLTDKVPPSPELVKRVRDLYHKRLPDVRFLIPVLNGLEKKEVIQALPKLIKLNPIVVKEVFNRLLGTQHGEGNSALSPLNPGELLIALHNIDSVKCDMKSIIKATNLCFAERNVYTSEVLAVVMQQLMEQSPLPMLLMRTVIQSLTMYPRLGGFVMNILARLIMKQVWKYPKVWEGFIKCCQRTKPQSFQVILQLPPQQLGAVFDKCPELREPLLAHVRSFTPHQQAHIPNSIMTILEATGKQEPEVKEAPSGPLEEDDLEPLALALAPAPAPAPAPAPAPAPAPRPPQDLIGLRLAQEKALKRQLEEEQKQKPTGIGAPAACVSSTPSVPAAARAGPTPAEEVMEYREEGPECETPAIFISMDDDSGLAETTLLDSSLEGPLPKEAAAVGSSSKDERSPQNLSHAVEEALKTSSPETREPESKGNS.

Positions 1 to 124 (MASSSGDSVT…NMLLRDENVN (124 aa)) are interaction with HSF1. At S13 the chain carries Phosphoserine. HEAT repeat units follow at residues 31-64 (TTSE…LIIN), 67-101 (PTLL…EACK), 104-146 (IELL…WMVK), 153-192 (LQEA…GLIV), and 227-266 (VLWE…IARQ). Residues 335 to 392 (IARNMPSSKDSRKRPRDDTDSTLKKMKLEPNLGEDDEDKDLEPGPSGTSKASAQISGQ) form a disordered region. The Nuclear localization signal motif lies at 345–360 (SRKRPRDDTDSTLKKM). The span at 349-362 (PRDDTDSTLKKMKL) shows a compositional bias: basic and acidic residues. K361 participates in a covalent cross-link: Glycyl lysine isopeptide (Lys-Gly) (interchain with G-Cter in SUMO1); alternate. A Glycyl lysine isopeptide (Lys-Gly) (interchain with G-Cter in SUMO2); alternate cross-link involves residue K361. Positions 380 to 392 (SGTSKASAQISGQ) are enriched in polar residues. K483 is covalently cross-linked (Glycyl lysine isopeptide (Lys-Gly) (interchain with G-Cter in SUMO2)). The residue at position 494 (S494) is a Phosphoserine. 2 disordered regions span residues 1130-1151 (PAPA…PPQD) and 1163-1288 (LKRQ…KGNS). Residues 1131–1149 (APAPAPAPAPAPAPAPRPP) show a composition bias toward pro residues. The segment covering 1163–1173 (LKRQLEEEQKQ) has biased composition (basic and acidic residues). Phosphoserine is present on residues S1238 and S1239. K1256 is covalently cross-linked (Glycyl lysine isopeptide (Lys-Gly) (interchain with G-Cter in SUMO1)). At S1260 the chain carries Phosphoserine. Over residues 1267–1288 (AVEEALKTSSPETREPESKGNS) the composition is skewed to basic and acidic residues. T1274 bears the Phosphothreonine mark. Position 1276 is a phosphoserine (S1276).

Belongs to the Symplekin family. As to quaternary structure, found in a heat-sensitive complex at least composed of several cleavage and polyadenylation specific and cleavage stimulation factors. Interacts with CPSF2, CPSF3 and CSTF2. Interacts (via N-terminus) with HSF1; this interaction is direct and occurs upon heat shock. Interacts with SSU72.

Its subcellular location is the cytoplasm. It localises to the cytoskeleton. It is found in the cell junction. The protein resides in the tight junction. The protein localises to the cell membrane. Its subcellular location is the nucleus. It localises to the nucleoplasm. In terms of biological role, scaffold protein that functions as a component of a multimolecular complex involved in histone mRNA 3'-end processing. Specific component of the tight junction (TJ) plaque, but might not be an exclusively junctional component. May have a house-keeping rule. Is involved in pre-mRNA polyadenylation. Enhances SSU72 phosphatase activity. This is Symplekin (Sympk) from Mus musculus (Mouse).